The following is a 498-amino-acid chain: ATP synthase subunit beta, chloroplastic (498 aa).

172–179 provides a ligand contact to ATP; the sequence is GGAGVGKT.

This sequence belongs to the ATPase alpha/beta chains family. In terms of assembly, F-type ATPases have 2 components, CF(1) - the catalytic core - and CF(0) - the membrane proton channel. CF(1) has five subunits: alpha(3), beta(3), gamma(1), delta(1), epsilon(1). CF(0) has four main subunits: a(1), b(1), b'(1) and c(9-12).

It localises to the plastid. It is found in the chloroplast thylakoid membrane. It carries out the reaction ATP + H2O + 4 H(+)(in) = ADP + phosphate + 5 H(+)(out). Produces ATP from ADP in the presence of a proton gradient across the membrane. The catalytic sites are hosted primarily by the beta subunits. This is ATP synthase subunit beta, chloroplastic from Jasminum nudiflorum (Winter jasmine).